The primary structure comprises 535 residues: CTP synthase (535 aa).

Residues 1–267 are amidoligase domain; sequence MTKYIFVTGG…DQIVCDHLKL (267 aa). Serine 13 contacts CTP. Residue serine 13 coordinates UTP. 14–19 contacts ATP; it reads SLGKGI. Tyrosine 54 provides a ligand contact to L-glutamine. Aspartate 71 serves as a coordination point for ATP. 2 residues coordinate Mg(2+): aspartate 71 and glutamate 141. CTP contacts are provided by residues 148–150, 188–193, and lysine 224; these read DIE and KTKPTQ. Residues 188 to 193 and lysine 224 each bind UTP; that span reads KTKPTQ. 240–242 contacts ATP; that stretch reads RDA. The Glutamine amidotransferase type-1 domain occupies 292 to 534; it reads KIALVGKYVE…VRASITNKES (243 aa). Glycine 354 is an L-glutamine binding site. The active-site Nucleophile; for glutamine hydrolysis is the cysteine 381. L-glutamine-binding positions include 382 to 385, glutamate 405, and arginine 462; that span reads LGMQ. Catalysis depends on residues histidine 507 and glutamate 509.

Belongs to the CTP synthase family. Homotetramer.

It carries out the reaction UTP + L-glutamine + ATP + H2O = CTP + L-glutamate + ADP + phosphate + 2 H(+). It catalyses the reaction L-glutamine + H2O = L-glutamate + NH4(+). The enzyme catalyses UTP + NH4(+) + ATP = CTP + ADP + phosphate + 2 H(+). Its pathway is pyrimidine metabolism; CTP biosynthesis via de novo pathway; CTP from UDP: step 2/2. Allosterically activated by GTP, when glutamine is the substrate; GTP has no effect on the reaction when ammonia is the substrate. The allosteric effector GTP functions by stabilizing the protein conformation that binds the tetrahedral intermediate(s) formed during glutamine hydrolysis. Inhibited by the product CTP, via allosteric rather than competitive inhibition. Its function is as follows. Catalyzes the ATP-dependent amination of UTP to CTP with either L-glutamine or ammonia as the source of nitrogen. Regulates intracellular CTP levels through interactions with the four ribonucleotide triphosphates. This chain is CTP synthase, found in Bacillus cereus (strain AH187).